The following is a 782-amino-acid chain: MRQKTLDVLEFEKIKSFVADETISDLGREKVQEMAPASNFDTVEFQMNETDEISQIYNKHRLPSLSGLAKVSPLVHRASIGGVLNVAELNRIKRLVQVQNQFKTFYNQMLEEDEEVKYPILHDKMNHLPILTDLFKEINETCDAHDLFDHASYTLQSIRSKISRTNQRIRQNLDRIVKNQGNQKKLSDAIVTVRNDRNVIPVKAEYRQDFNGIVHDQSASGQTLYIEPNSVVEMNNQISRLRNDEAVERERILTELTGFVSAEADALLIAESVMGQIDFLIAKARYARTIKGTKPTFKEDRTIYLPNAFHPLLDKDTVVANTIEFIDDVETVIITGPNTGGKTVTLKTLGLIIVMAQSGLLIPTLDGSQLSIFENVYCDIGDEQSIEQSLSTFSSHMKNIVEILQDADQNSLILFDELGAGTDPSEGAALAMSILDYVRRLGSLVMATTHYPELKAYSYNREGVMNASVEFDVETLSPTYKLLMGVPGRSNAFDISKKLGLSLNIINKAKTMIGTDEQEINAMIESLEQNSKRVDQQRIELDRLVREAQQTHDALSKQYQQYQNYETSLMDEAKEKANQRVKSATKEADEILKELRNLRDHKGAEVKEHELIDKKKQLDDQYEVKSIKQHVQKKKYDTIHTGDEVKVLSYGQKGEVLELVGDEEAVVQMGIIKMKLPIEDLEKTKKKKEKPTKMVTRQNRQTIKTELDLRGYRYEEALNELDQYLDQAVLSNYEQVYIIHGKGTGALQKGVQQHLKKHKSVRQFRGGMPSEGGFGVTVAELK.

Residue 336 to 343 coordinates ATP; the sequence is GPNTGGKT. The region spanning 707-782 is the Smr domain; the sequence is LDLRGYRYEE…GFGVTVAELK (76 aa).

This sequence belongs to the DNA mismatch repair MutS family. MutS2 subfamily. As to quaternary structure, homodimer. Binds to stalled ribosomes, contacting rRNA.

Endonuclease that is involved in the suppression of homologous recombination and thus may have a key role in the control of bacterial genetic diversity. Its function is as follows. Acts as a ribosome collision sensor, splitting the ribosome into its 2 subunits. Detects stalled/collided 70S ribosomes which it binds and splits by an ATP-hydrolysis driven conformational change. Acts upstream of the ribosome quality control system (RQC), a ribosome-associated complex that mediates the extraction of incompletely synthesized nascent chains from stalled ribosomes and their subsequent degradation. Probably generates substrates for RQC. This is Endonuclease MutS2 from Staphylococcus epidermidis (strain ATCC 35984 / DSM 28319 / BCRC 17069 / CCUG 31568 / BM 3577 / RP62A).